A 273-amino-acid chain; its full sequence is Formamidopyrimidine-DNA glycosylase (273 aa).

P2 acts as the Schiff-base intermediate with DNA in catalysis. The active-site Proton donor is the E3. K57 serves as the catalytic Proton donor; for beta-elimination activity. Positions 91, 110, and 151 each coordinate DNA. An FPG-type zinc finger spans residues 236–270 (QVYGRKDEACNDCGTIIEAKVIGQRNSYFCPHCQM). R260 (proton donor; for delta-elimination activity) is an active-site residue.

The protein belongs to the FPG family. As to quaternary structure, monomer. The cofactor is Zn(2+).

It catalyses the reaction Hydrolysis of DNA containing ring-opened 7-methylguanine residues, releasing 2,6-diamino-4-hydroxy-5-(N-methyl)formamidopyrimidine.. The catalysed reaction is 2'-deoxyribonucleotide-(2'-deoxyribose 5'-phosphate)-2'-deoxyribonucleotide-DNA = a 3'-end 2'-deoxyribonucleotide-(2,3-dehydro-2,3-deoxyribose 5'-phosphate)-DNA + a 5'-end 5'-phospho-2'-deoxyribonucleoside-DNA + H(+). Its function is as follows. Involved in base excision repair of DNA damaged by oxidation or by mutagenic agents. Acts as a DNA glycosylase that recognizes and removes damaged bases. Has a preference for oxidized purines, such as 7,8-dihydro-8-oxoguanine (8-oxoG). Has AP (apurinic/apyrimidinic) lyase activity and introduces nicks in the DNA strand. Cleaves the DNA backbone by beta-delta elimination to generate a single-strand break at the site of the removed base with both 3'- and 5'-phosphates. This Actinobacillus pleuropneumoniae serotype 3 (strain JL03) protein is Formamidopyrimidine-DNA glycosylase.